We begin with the raw amino-acid sequence, 209 residues long: Protease (209 aa).

Active-site residues include H55, D72, and C123.

The protein belongs to the peptidase C5 family. Interacts with protease cofactor pVI-C; this interaction is necessary for protease activation.

It localises to the virion. The protein localises to the host nucleus. It carries out the reaction Cleaves proteins of the adenovirus and its host cell at two consensus sites: -Yaa-Xaa-Gly-Gly-|-Xaa- and -Yaa-Xaa-Gly-Xaa-|-Gly- (in which Yaa is Met, Ile or Leu, and Xaa is any amino acid).. Requires DNA and protease cofactor for maximal activation. Inside nascent virions, becomes partially activated by binding to the viral DNA, allowing it to cleave the cofactor that binds to the protease and fully activates it. Actin, like the viral protease cofactor, seems to act as a cofactor in the cleavage of cytokeratin 18 and of actin itself. Its function is as follows. Cleaves viral precursor proteins (pTP, pIIIa, pVI, pVII, pVIII, and pX) inside newly assembled particles giving rise to mature virions. Protease complexed to its cofactor slides along the viral DNA to specifically locate and cleave the viral precursors. Mature virions have a weakened organization compared to the unmature virions, thereby facilitating subsequent uncoating. Without maturation, the particle lacks infectivity and is unable to uncoat. Late in adenovirus infection, in the cytoplasm, may participate in the cytoskeleton destruction. Cleaves host cell cytoskeletal keratins K7 and K18. This Human adenovirus D serotype 9 (HAdV-9) protein is Protease.